The following is a 204-amino-acid chain: Phosphopantothenoylcysteine decarboxylase (204 aa).

FMN is bound by residues phenylalanine 59 and 104-107 (DANT). Asparagine 140 contributes to the substrate binding site. The Proton donor role is filled by cysteine 173.

It belongs to the HFCD (homooligomeric flavin containing Cys decarboxylase) superfamily. In terms of assembly, homotrimer. It depends on FMN as a cofactor.

The catalysed reaction is N-[(R)-4-phosphopantothenoyl]-L-cysteine + H(+) = (R)-4'-phosphopantetheine + CO2. It participates in cofactor biosynthesis; coenzyme A biosynthesis; CoA from (R)-pantothenate: step 3/5. Its function is as follows. Catalyzes the decarboxylation of the cysteine moiety of 4-phosphopantothenoylcysteine to form 4'-phosphopantotheine and this reaction forms part of the biosynthesis of coenzyme A. This chain is Phosphopantothenoylcysteine decarboxylase (PPCDC), found in Homo sapiens (Human).